Consider the following 176-residue polypeptide: Shikimate kinase (176 aa).

14 to 19 (GAGKSS) lines the ATP pocket. A Mg(2+)-binding site is contributed by serine 18. The substrate site is built by aspartate 36, arginine 60, and glycine 82. Residue arginine 120 coordinates ATP. Arginine 138 lines the substrate pocket.

The protein belongs to the shikimate kinase family. In terms of assembly, monomer. Mg(2+) is required as a cofactor.

The protein localises to the cytoplasm. It catalyses the reaction shikimate + ATP = 3-phosphoshikimate + ADP + H(+). The protein operates within metabolic intermediate biosynthesis; chorismate biosynthesis; chorismate from D-erythrose 4-phosphate and phosphoenolpyruvate: step 5/7. Its function is as follows. Catalyzes the specific phosphorylation of the 3-hydroxyl group of shikimic acid using ATP as a cosubstrate. This is Shikimate kinase from Dehalococcoides mccartyi (strain ATCC BAA-2266 / KCTC 15142 / 195) (Dehalococcoides ethenogenes (strain 195)).